Reading from the N-terminus, the 354-residue chain is Clavesin-1 (354 aa).

The CRAL-TRIO domain maps to 118–279; it reads IKRALIDGFP…EFGGTLPPYD (162 aa). A disordered region spans residues 317–354; that stretch reads RECSPKPMKRSQSVVEAGTLKHEEKGENENTQPLLALD. Residues 335 to 344 are compositionally biased toward basic and acidic residues; the sequence is TLKHEEKGEN. Positions 345-354 are enriched in polar residues; it reads ENTQPLLALD.

In terms of assembly, forms a complex with clathrin heavy chain and gamma-adaptin. Expressed in brain with no expression detected in non-neuronal tissues (at protein level).

The protein localises to the golgi apparatus. It localises to the trans-Golgi network membrane. Its subcellular location is the early endosome membrane. The protein resides in the cytoplasmic vesicle. It is found in the clathrin-coated vesicle. Its function is as follows. Required for normal morphology of late endosomes and/or lysosomes in neurons. Binds phosphatidylinositol 3,5-bisphosphate (PtdIns(3,5)P2). In Rattus norvegicus (Rat), this protein is Clavesin-1.